We begin with the raw amino-acid sequence, 122 residues long: Ribosome-binding factor A (122 aa).

This sequence belongs to the RbfA family. As to quaternary structure, monomer. Binds 30S ribosomal subunits, but not 50S ribosomal subunits or 70S ribosomes.

Its subcellular location is the cytoplasm. In terms of biological role, one of several proteins that assist in the late maturation steps of the functional core of the 30S ribosomal subunit. Associates with free 30S ribosomal subunits (but not with 30S subunits that are part of 70S ribosomes or polysomes). Required for efficient processing of 16S rRNA. May interact with the 5'-terminal helix region of 16S rRNA. The chain is Ribosome-binding factor A from Cupriavidus necator (strain ATCC 17699 / DSM 428 / KCTC 22496 / NCIMB 10442 / H16 / Stanier 337) (Ralstonia eutropha).